We begin with the raw amino-acid sequence, 33 residues long: Actin (33 aa).

This sequence belongs to the actin family.

It localises to the cytoplasm. Its subcellular location is the cytoskeleton. It catalyses the reaction ATP + H2O = ADP + phosphate + H(+). Functionally, actins are highly conserved proteins that are involved in various types of cell motility and are ubiquitously expressed in all eukaryotic cells. The sequence is that of Actin from Dictyocaulus viviparus (Bovine lungworm).